The primary structure comprises 238 residues: Orotidine 5'-phosphate decarboxylase (238 aa).

Substrate contacts are provided by residues Asp10, Lys32, 59–68, Thr122, Arg184, Gln193, Gly213, and Arg214; that span reads DLKLHDIPNT. The Proton donor role is filled by Lys61.

This sequence belongs to the OMP decarboxylase family. Type 1 subfamily. In terms of assembly, homodimer.

The catalysed reaction is orotidine 5'-phosphate + H(+) = UMP + CO2. The protein operates within pyrimidine metabolism; UMP biosynthesis via de novo pathway; UMP from orotate: step 2/2. In terms of biological role, catalyzes the decarboxylation of orotidine 5'-monophosphate (OMP) to uridine 5'-monophosphate (UMP). This Bacillus cereus (strain G9842) protein is Orotidine 5'-phosphate decarboxylase.